We begin with the raw amino-acid sequence, 135 residues long: uncharacterized protein (135 aa).

Residues 25-123 enclose the HTH hxlR-type domain; the sequence is CPIQHVVDLL…LGSDWLEQES (99 aa).

This is an uncharacterized protein from Synechocystis sp. (strain ATCC 27184 / PCC 6803 / Kazusa).